The chain runs to 437 residues: Serine hydroxymethyltransferase (437 aa).

(6S)-5,6,7,8-tetrahydrofolate is bound by residues leucine 130 and 134–136 (GHL). Lysine 239 is subject to N6-(pyridoxal phosphate)lysine. 363-365 (TPF) is a (6S)-5,6,7,8-tetrahydrofolate binding site.

The protein belongs to the SHMT family. In terms of assembly, homodimer. Pyridoxal 5'-phosphate serves as cofactor.

It is found in the cytoplasm. The catalysed reaction is (6R)-5,10-methylene-5,6,7,8-tetrahydrofolate + glycine + H2O = (6S)-5,6,7,8-tetrahydrofolate + L-serine. It participates in one-carbon metabolism; tetrahydrofolate interconversion. Its pathway is amino-acid biosynthesis; glycine biosynthesis; glycine from L-serine: step 1/1. Its function is as follows. Catalyzes the reversible interconversion of serine and glycine with tetrahydrofolate (THF) serving as the one-carbon carrier. This reaction serves as the major source of one-carbon groups required for the biosynthesis of purines, thymidylate, methionine, and other important biomolecules. Also exhibits THF-independent aldolase activity toward beta-hydroxyamino acids, producing glycine and aldehydes, via a retro-aldol mechanism. The protein is Serine hydroxymethyltransferase of Bartonella henselae (strain ATCC 49882 / DSM 28221 / CCUG 30454 / Houston 1) (Rochalimaea henselae).